We begin with the raw amino-acid sequence, 170 residues long: Acireductone dioxygenase (170 aa).

The Fe(2+) site is built by H99, H101, E105, and H144. H99, H101, E105, and H144 together coordinate Ni(2+).

It belongs to the acireductone dioxygenase (ARD) family. In terms of assembly, monomer. It depends on Fe(2+) as a cofactor. Ni(2+) is required as a cofactor.

The enzyme catalyses 1,2-dihydroxy-5-(methylsulfanyl)pent-1-en-3-one + O2 = 3-(methylsulfanyl)propanoate + CO + formate + 2 H(+). The catalysed reaction is 1,2-dihydroxy-5-(methylsulfanyl)pent-1-en-3-one + O2 = 4-methylsulfanyl-2-oxobutanoate + formate + 2 H(+). Its pathway is amino-acid biosynthesis; L-methionine biosynthesis via salvage pathway; L-methionine from S-methyl-5-thio-alpha-D-ribose 1-phosphate: step 5/6. Its function is as follows. Catalyzes 2 different reactions between oxygen and the acireductone 1,2-dihydroxy-3-keto-5-methylthiopentene (DHK-MTPene) depending upon the metal bound in the active site. Fe-containing acireductone dioxygenase (Fe-ARD) produces formate and 2-keto-4-methylthiobutyrate (KMTB), the alpha-ketoacid precursor of methionine in the methionine recycle pathway. Ni-containing acireductone dioxygenase (Ni-ARD) produces methylthiopropionate, carbon monoxide and formate, and does not lie on the methionine recycle pathway. This chain is Acireductone dioxygenase, found in Bacillus anthracis.